Reading from the N-terminus, the 479-residue chain is ATP synthase subunit beta (479 aa).

168–175 (GGAGVGKT) is a binding site for ATP.

Belongs to the ATPase alpha/beta chains family. In terms of assembly, F-type ATPases have 2 components, CF(1) - the catalytic core - and CF(0) - the membrane proton channel. CF(1) has five subunits: alpha(3), beta(3), gamma(1), delta(1), epsilon(1). CF(0) has three main subunits: a(1), b(2) and c(9-12). The alpha and beta chains form an alternating ring which encloses part of the gamma chain. CF(1) is attached to CF(0) by a central stalk formed by the gamma and epsilon chains, while a peripheral stalk is formed by the delta and b chains.

Its subcellular location is the cell membrane. It carries out the reaction ATP + H2O + 4 H(+)(in) = ADP + phosphate + 5 H(+)(out). Its function is as follows. Produces ATP from ADP in the presence of a proton gradient across the membrane. The catalytic sites are hosted primarily by the beta subunits. This is ATP synthase subunit beta from Frankia alni (strain DSM 45986 / CECT 9034 / ACN14a).